A 355-amino-acid chain; its full sequence is Uroporphyrinogen decarboxylase (355 aa).

Substrate contacts are provided by residues 27 to 31 (RQAGR), aspartate 77, tyrosine 154, threonine 209, and histidine 327.

It belongs to the uroporphyrinogen decarboxylase family. As to quaternary structure, homodimer.

It is found in the cytoplasm. It catalyses the reaction uroporphyrinogen III + 4 H(+) = coproporphyrinogen III + 4 CO2. It functions in the pathway porphyrin-containing compound metabolism; protoporphyrin-IX biosynthesis; coproporphyrinogen-III from 5-aminolevulinate: step 4/4. Functionally, catalyzes the decarboxylation of four acetate groups of uroporphyrinogen-III to yield coproporphyrinogen-III. This chain is Uroporphyrinogen decarboxylase, found in Aeromonas salmonicida (strain A449).